Reading from the N-terminus, the 627-residue chain is UvrABC system protein C (627 aa).

The GIY-YIG domain maps to 26 to 105 (PEPGVYFMRD…IKQHQPYFNV (80 aa)). The 36-residue stretch at 215–250 (QELIDILSEQMEKAAEALNFEVAARIRDQIAGLKSL) folds into the UVR domain.

It belongs to the UvrC family. As to quaternary structure, interacts with UvrB in an incision complex.

Its subcellular location is the cytoplasm. Functionally, the UvrABC repair system catalyzes the recognition and processing of DNA lesions. UvrC both incises the 5' and 3' sides of the lesion. The N-terminal half is responsible for the 3' incision and the C-terminal half is responsible for the 5' incision. This chain is UvrABC system protein C, found in Trichormus variabilis (strain ATCC 29413 / PCC 7937) (Anabaena variabilis).